The chain runs to 419 residues: GTPase Obg (419 aa).

Residues 2–159 (SAFVDAVTVE…FLAKVELQVL (158 aa)) form the Obg domain. The region spanning 160–325 (ADVGLLGYPN…LKYEIATTLK (166 aa)) is the OBG-type G domain. Residues 166-173 (GYPNVGKS), 191-195 (FTTLS), 212-215 (DLPG), 279-282 (NKMD), and 306-308 (SAL) contribute to the GTP site. Residues S173 and T193 each coordinate Mg(2+). Positions 341–419 (LNAEDAVDFI…IFSYEFEYLE (79 aa)) constitute an OCT domain.

The protein belongs to the TRAFAC class OBG-HflX-like GTPase superfamily. OBG GTPase family. In terms of assembly, monomer. Requires Mg(2+) as cofactor.

Its subcellular location is the cytoplasm. Functionally, an essential GTPase which binds GTP, GDP and possibly (p)ppGpp with moderate affinity, with high nucleotide exchange rates and a fairly low GTP hydrolysis rate. Plays a role in control of the cell cycle, stress response, ribosome biogenesis and in those bacteria that undergo differentiation, in morphogenesis control. This is GTPase Obg from Acholeplasma laidlawii (strain PG-8A).